A 379-amino-acid polypeptide reads, in one-letter code: Oxysterol-binding protein-related protein 4C (379 aa).

It belongs to the OSBP family. Expressed in flowers.

Functionally, may be involved in the transport of sterols. This Arabidopsis thaliana (Mouse-ear cress) protein is Oxysterol-binding protein-related protein 4C (ORP4C).